Consider the following 346-residue polypeptide: KLSKNKSDRYLPKVGDSLPESIDWREKGVLVGVKDQGSCGSCWAFSAVAAMESINAIVTGNLISLSEQELVDCDRSYNEGCDGGLMDYAFEFVIKNGGIDTEEDYPYKERNGVCDQYRKNAKVVKIDSYEDVPVNNEKALQKAVAHQPVSIALEAGGRDFQHYKSGIFTGKCGTAVDHGVVIAGYGTENGMDYWIVRNSWGANCRENGYLRVQRNVSSSSGLCGLAIEPSYPVKTGPNPPKPAPSPPSPVKPPTECDEYSQCAVGTTCCCILQFRRSCFSWGCCPLEGATCCEDHYSCCPHDYPICNVRQGTCSMSKGNPLGVKAMKRILAQPIGAFGNGGKKSSS.

Residues Lys-1–Ser-17 constitute a propeptide, activation peptide. Cystine bridges form between Cys-39/Cys-81, Cys-73/Cys-114, Cys-172/Cys-223, Cys-256/Cys-268, and Cys-262/Cys-283. Residue Cys-42 is part of the active site. Active-site residues include His-178 and Asn-198. A glycan (N-linked (GlcNAc...) asparagine) is linked at Asn-215. Residues Asn-238–Ser-346 constitute a propeptide, removed in mature form.

This sequence belongs to the peptidase C1 family.

The sequence is that of Low-temperature-induced cysteine proteinase from Solanum lycopersicum (Tomato).